The chain runs to 510 residues: ATP synthase subunit alpha (510 aa).

Residue 170-177 (GDRQTGKT) coordinates ATP.

This sequence belongs to the ATPase alpha/beta chains family. In terms of assembly, F-type ATPases have 2 components, CF(1) - the catalytic core - and CF(0) - the membrane proton channel. CF(1) has five subunits: alpha(3), beta(3), gamma(1), delta(1), epsilon(1). CF(0) has three main subunits: a(1), b(2) and c(9-12). The alpha and beta chains form an alternating ring which encloses part of the gamma chain. CF(1) is attached to CF(0) by a central stalk formed by the gamma and epsilon chains, while a peripheral stalk is formed by the delta and b chains.

The protein localises to the cell inner membrane. It catalyses the reaction ATP + H2O + 4 H(+)(in) = ADP + phosphate + 5 H(+)(out). In terms of biological role, produces ATP from ADP in the presence of a proton gradient across the membrane. The alpha chain is a regulatory subunit. This is ATP synthase subunit alpha from Caulobacter vibrioides (strain ATCC 19089 / CIP 103742 / CB 15) (Caulobacter crescentus).